A 142-amino-acid chain; its full sequence is Large ribosomal subunit protein uL11 (142 aa).

The protein belongs to the universal ribosomal protein uL11 family. As to quaternary structure, part of the ribosomal stalk of the 50S ribosomal subunit. Interacts with L10 and the large rRNA to form the base of the stalk. L10 forms an elongated spine to which L12 dimers bind in a sequential fashion forming a multimeric L10(L12)X complex. In terms of processing, one or more lysine residues are methylated.

Functionally, forms part of the ribosomal stalk which helps the ribosome interact with GTP-bound translation factors. The chain is Large ribosomal subunit protein uL11 from Shewanella baltica (strain OS223).